We begin with the raw amino-acid sequence, 570 residues long: Protein HEATR9 (570 aa).

This is Protein HEATR9 (HEATR9) from Macaca fascicularis (Crab-eating macaque).